A 499-amino-acid polypeptide reads, in one-letter code: MALRVTADVWLARPWQCLHRTRALGTTAKVAPKTLKPFEAIPQYSRNKWLKMIQILREQGQENLHLEMHQAFQELGPIFRHSAGGAQIVSVMLPEDAEKLHQVESILPHRMPLEPWVAHRELRGLRRGVFLLNGADWRFNRLQLNPNMLSPKAIQSFVPFVDVVARDFVENLKKRMLENVHGSMSINIQSNMFNYTMEASHFVISGERLGLTGHDLKPESVTFTHALHSMFKSTTQLMFLPKSLTRWTSTRVWKEHFDSWDIISEYVTKCIKNVYRELAEGRQQSWSVISEMVAQSTLSMDAIHANSMELIAGSVDTTAISLVMTLFELARNPDVQQALRQESLAAEASIVANPQKAMSDLPLLRAALKETLRLYPVGSFVERIVHSDLVLQNYHVPAGTFVIIYLYSMGRNPAVFPRPERYMPQRWLERKRSFQHLAFGFGVRQCLGRRLAEVEMLLLLHHMLKTFQVETLRQEDMQMVFRFLLMPSSSPFLTFRPVS.

The N-terminal 24 residues, 1–24 (MALRVTADVWLARPWQCLHRTRAL), are a transit peptide targeting the mitochondrion. A heme-binding site is contributed by C446.

Belongs to the cytochrome P450 family. Heme is required as a cofactor. In terms of tissue distribution, adrenal zona fasciculata/reticularis.

The protein resides in the mitochondrion inner membrane. The catalysed reaction is a steroid + 2 reduced [adrenodoxin] + O2 + 2 H(+) = an 11beta-hydroxysteroid + 2 oxidized [adrenodoxin] + H2O. It carries out the reaction 21-hydroxyprogesterone + 2 reduced [adrenodoxin] + O2 + 2 H(+) = corticosterone + 2 oxidized [adrenodoxin] + H2O. It catalyses the reaction 21-hydroxyprogesterone + 2 reduced [adrenodoxin] + O2 + 2 H(+) = 18-hydroxy-11-deoxycorticosterone + 2 oxidized [adrenodoxin] + H2O. The enzyme catalyses 21-hydroxyprogesterone + 2 reduced [adrenodoxin] + O2 + 2 H(+) = 19-hydroxy-11-deoxycorticosterone + 2 oxidized [adrenodoxin] + H2O. The catalysed reaction is 11-deoxycortisol + 2 reduced [adrenodoxin] + O2 + 2 H(+) = cortisol + 2 oxidized [adrenodoxin] + H2O. It carries out the reaction cortisol + 2 reduced [adrenodoxin] + O2 + 2 H(+) = 18-hydroxycortisol + 2 oxidized [adrenodoxin] + H2O. It catalyses the reaction 11-deoxycortisol + 2 reduced [adrenodoxin] + O2 + 2 H(+) = 18-hydroxy-11-deoxycortisol + 2 oxidized [adrenodoxin] + H2O. The protein operates within steroid biosynthesis; glucocorticoid biosynthesis. It functions in the pathway steroid hormone biosynthesis. In terms of biological role, a cytochrome P450 monooxygenase involved in the biosynthesis of adrenal corticoids. Catalyzes a variety of reactions that are essential for many species, including detoxification, defense, and the formation of endogenous chemicals like steroid hormones. Steroid 11beta, 18- and 19-hydroxylase with preferred regioselectivity at 11beta, then 18, and lastly 19. Catalyzes the hydroxylation of 11-deoxycortisol and 11-deoxycorticosterone (21-hydroxyprogesterone) at 11beta position, yielding cortisol or corticosterone, respectively, but cannot produce aldosterone. Mechanistically, uses molecular oxygen inserting one oxygen atom into a substrate for hydroxylation and reducing the second into a water molecule. Two electrons are provided by NADPH via a two-protein mitochondrial transfer system comprising flavoprotein FDXR (adrenodoxin/ferredoxin reductase) and nonheme iron-sulfur protein FDX1 or FDX2 (adrenodoxin/ferredoxin). Due to its lack of 18-oxidation activity, it is incapable of generating aldosterone. Could also be involved in the androgen metabolic pathway. This is Cytochrome P450 11B1, mitochondrial (Cyp11b1) from Rattus norvegicus (Rat).